The primary structure comprises 97 residues: UPF0235 protein APL_1380 (97 aa).

Belongs to the UPF0235 family.

In Actinobacillus pleuropneumoniae serotype 5b (strain L20), this protein is UPF0235 protein APL_1380.